The following is a 447-amino-acid chain: Folate synthesis bifunctional protein (447 aa).

The tract at residues 1–165 (MTTAQFICLS…SFGEIAHLLP (165 aa)) is HPPK. A Pterin-binding domain is found at 179–438 (TLLMGVVNVT…DVEANQRVLS (260 aa)). Residues 181–447 (LMGVVNVTDN…SAAAWSGVHV (267 aa)) form a DHPS region. Asn186 is a binding site for Mg(2+). (7,8-dihydropterin-6-yl)methyl diphosphate contacts are provided by residues Thr226, Asp266, Asn286, Asp356, Lys392, and 426-428 (RVH).

In the C-terminal section; belongs to the DHPS family. The protein in the N-terminal section; belongs to the HPPK family. It depends on Mg(2+) as a cofactor.

It catalyses the reaction 6-hydroxymethyl-7,8-dihydropterin + ATP = (7,8-dihydropterin-6-yl)methyl diphosphate + AMP + H(+). It carries out the reaction (7,8-dihydropterin-6-yl)methyl diphosphate + 4-aminobenzoate = 7,8-dihydropteroate + diphosphate. The protein operates within cofactor biosynthesis; tetrahydrofolate biosynthesis; 2-amino-4-hydroxy-6-hydroxymethyl-7,8-dihydropteridine diphosphate from 7,8-dihydroneopterin triphosphate: step 4/4. Its pathway is cofactor biosynthesis; tetrahydrofolate biosynthesis; 7,8-dihydrofolate from 2-amino-4-hydroxy-6-hydroxymethyl-7,8-dihydropteridine diphosphate and 4-aminobenzoate: step 1/2. The chain is Folate synthesis bifunctional protein (folKP) from Chlamydia caviae (strain ATCC VR-813 / DSM 19441 / 03DC25 / GPIC) (Chlamydophila caviae).